The primary structure comprises 64 residues: Conotoxin Mr3.5 (64 aa).

An N-terminal signal peptide occupies residues 1–19 (MSKLGVLLTICLLLFPLTA). A propeptide spanning residues 20–46 (LPLDGDQPADQRAERTQAEKHSLPDPR) is cleaved from the precursor. 3 cysteine pairs are disulfide-bonded: Cys49-Cys58, Cys50-Cys62, and Cys54-Cys63. Cysteine amide is present on Cys63.

Belongs to the conotoxin M superfamily. In terms of tissue distribution, expressed by the venom duct.

It localises to the secreted. The chain is Conotoxin Mr3.5 from Conus marmoreus (Marble cone).